The sequence spans 117 residues: Iron-sulfur cluster insertion protein ErpA (117 aa).

Iron-sulfur cluster-binding residues include C45, C109, and C111.

The protein belongs to the HesB/IscA family. As to quaternary structure, homodimer. Iron-sulfur cluster serves as cofactor.

In terms of biological role, required for insertion of 4Fe-4S clusters for at least IspG. In Hahella chejuensis (strain KCTC 2396), this protein is Iron-sulfur cluster insertion protein ErpA.